A 330-amino-acid polypeptide reads, in one-letter code: Ketol-acid reductoisomerase (NADP(+)) (330 aa).

Residues 1–181 (MKVFYDSDFK…GLSRAGVIQT (181 aa)) enclose the KARI N-terminal Rossmann domain. NADP(+) contacts are provided by residues 24-27 (YGSQ), Arg-47, Ser-52, and 82-85 (DELQ). His-107 is a catalytic residue. Residue Gly-133 coordinates NADP(+). Residues 182-327 (TFKEETETDL…AKLRKMCGLE (146 aa)) form the KARI C-terminal knotted domain. Residues Asp-190, Glu-194, Glu-226, and Glu-230 each coordinate Mg(2+). Ser-251 lines the substrate pocket.

The protein belongs to the ketol-acid reductoisomerase family. The cofactor is Mg(2+).

It catalyses the reaction (2R)-2,3-dihydroxy-3-methylbutanoate + NADP(+) = (2S)-2-acetolactate + NADPH + H(+). The enzyme catalyses (2R,3R)-2,3-dihydroxy-3-methylpentanoate + NADP(+) = (S)-2-ethyl-2-hydroxy-3-oxobutanoate + NADPH + H(+). It participates in amino-acid biosynthesis; L-isoleucine biosynthesis; L-isoleucine from 2-oxobutanoate: step 2/4. Its pathway is amino-acid biosynthesis; L-valine biosynthesis; L-valine from pyruvate: step 2/4. Involved in the biosynthesis of branched-chain amino acids (BCAA). Catalyzes an alkyl-migration followed by a ketol-acid reduction of (S)-2-acetolactate (S2AL) to yield (R)-2,3-dihydroxy-isovalerate. In the isomerase reaction, S2AL is rearranged via a Mg-dependent methyl migration to produce 3-hydroxy-3-methyl-2-ketobutyrate (HMKB). In the reductase reaction, this 2-ketoacid undergoes a metal-dependent reduction by NADPH to yield (R)-2,3-dihydroxy-isovalerate. This chain is Ketol-acid reductoisomerase (NADP(+)), found in Methanococcus maripaludis (strain C5 / ATCC BAA-1333).